The chain runs to 101 residues: Small ribosomal subunit protein uS14 (101 aa).

This sequence belongs to the universal ribosomal protein uS14 family. Part of the 30S ribosomal subunit. Contacts proteins S3 and S10.

Its function is as follows. Binds 16S rRNA, required for the assembly of 30S particles and may also be responsible for determining the conformation of the 16S rRNA at the A site. In Leptothrix cholodnii (strain ATCC 51168 / LMG 8142 / SP-6) (Leptothrix discophora (strain SP-6)), this protein is Small ribosomal subunit protein uS14.